The following is a 231-amino-acid chain: Orotidine 5'-phosphate decarboxylase (231 aa).

Residues Asp-11, Lys-33, 60 to 69, Thr-117, Arg-179, Gln-187, Gly-207, and Arg-208 each bind substrate; that span reads DLKLHDIPNT. Lys-62 acts as the Proton donor in catalysis.

The protein belongs to the OMP decarboxylase family. Type 1 subfamily. Homodimer.

The enzyme catalyses orotidine 5'-phosphate + H(+) = UMP + CO2. Its pathway is pyrimidine metabolism; UMP biosynthesis via de novo pathway; UMP from orotate: step 2/2. In terms of biological role, catalyzes the decarboxylation of orotidine 5'-monophosphate (OMP) to uridine 5'-monophosphate (UMP). This Ehrlichia chaffeensis (strain ATCC CRL-10679 / Arkansas) protein is Orotidine 5'-phosphate decarboxylase.